A 2427-amino-acid chain; its full sequence is Interferon-induced very large GTPase 1 (2427 aa).

The region spanning Asp-1485–Gln-1726 is the VLIG-type G domain. Residues Gly-1495 to Ser-1502, Asp-1548 to Gly-1551, and Thr-1625 to Asp-1628 each bind GTP.

Belongs to the TRAFAC class dynamin-like GTPase superfamily. Very large inducible GTPase (VLIG) family. In terms of tissue distribution, widely expressed. Expressed at low basal level in lung, heart, thymus and spleen; at still lower level in liver, ovary, kidney and brain. Expressed at very weak level in testis. Undetectable in embryo.

The protein resides in the cytoplasm. It localises to the cytosol. It is found in the nucleus. The chain is Interferon-induced very large GTPase 1 (Gvin1) from Mus musculus (Mouse).